Here is a 255-residue protein sequence, read N- to C-terminus: Electron transfer flavoprotein subunit beta (255 aa).

Ala2 carries the post-translational modification N-acetylalanine. Residues Ala9, 39–42 (NPFC), Cys66, and 123–134 (GKQAIDDDCNQT) contribute to the AMP site. Residues 183–205 (ADLRLNEPRYATLPNIMKAKKKK) form a recognition loop region. Lys200 carries the N6,N6,N6-trimethyllysine; by ETFBKMT; alternate modification. Residue Lys200 is modified to N6-acetyllysine; alternate. Lys200 carries the post-translational modification N6-methyllysine; alternate. Position 203 is an N6,N6,N6-trimethyllysine; by ETFBKMT (Lys203). Lys210 is subject to N6-acetyllysine; alternate. At Lys210 the chain carries N6-succinyllysine; alternate. Ser223 and Ser226 each carry phosphoserine. Position 238 is an N6-acetyllysine (Lys238). N6-acetyllysine; alternate is present on Lys248. Residue Lys248 is modified to N6-succinyllysine; alternate.

The protein belongs to the ETF beta-subunit/FixA family. Heterodimer composed of ETFA and ETFB. Identified in a complex that contains ETFA, ETFB and ETFRF1. Interacts with ACADM. Methylated. Trimethylation at Lys-200 and Lys-203 may negatively regulate the activity in electron transfer from acyl-CoA dehydrogenases.

It localises to the mitochondrion matrix. Heterodimeric electron transfer flavoprotein that accepts electrons from several mitochondrial dehydrogenases, including acyl-CoA dehydrogenases, glutaryl-CoA and sarcosine dehydrogenase. It transfers the electrons to the main mitochondrial respiratory chain via ETF-ubiquinone oxidoreductase. Required for normal mitochondrial fatty acid oxidation and normal amino acid metabolism. ETFB binds an AMP molecule that probably has a purely structural role. The chain is Electron transfer flavoprotein subunit beta from Mus musculus (Mouse).